The primary structure comprises 405 residues: L-rhamnonate dehydratase (405 aa).

Positions 33 and 59 each coordinate substrate. Positions 226, 252, and 280 each coordinate Mg(2+). Histidine 329 functions as the Proton acceptor in the catalytic mechanism. Glutamate 349 contributes to the substrate binding site.

The protein belongs to the mandelate racemase/muconate lactonizing enzyme family. RhamD subfamily. Homooctamer; tetramer of dimers. It depends on Mg(2+) as a cofactor.

It carries out the reaction L-rhamnonate = 2-dehydro-3-deoxy-L-rhamnonate + H2O. In terms of biological role, catalyzes the dehydration of L-rhamnonate to 2-keto-3-deoxy-L-rhamnonate (KDR). This Salmonella paratyphi A (strain AKU_12601) protein is L-rhamnonate dehydratase.